The following is a 169-amino-acid chain: UPF0303 protein Oant_1766 (169 aa).

Belongs to the UPF0303 family.

This is UPF0303 protein Oant_1766 from Brucella anthropi (strain ATCC 49188 / DSM 6882 / CCUG 24695 / JCM 21032 / LMG 3331 / NBRC 15819 / NCTC 12168 / Alc 37) (Ochrobactrum anthropi).